The following is a 622-amino-acid chain: Chaperone protein HscA homolog (622 aa).

Belongs to the heat shock protein 70 family.

Its function is as follows. Chaperone involved in the maturation of iron-sulfur cluster-containing proteins. Has a low intrinsic ATPase activity which is markedly stimulated by HscB. The sequence is that of Chaperone protein HscA homolog from Burkholderia ambifaria (strain MC40-6).